The chain runs to 88 residues: Small ribosomal subunit protein uS17 (88 aa).

The protein belongs to the universal ribosomal protein uS17 family. In terms of assembly, part of the 30S ribosomal subunit.

In terms of biological role, one of the primary rRNA binding proteins, it binds specifically to the 5'-end of 16S ribosomal RNA. This chain is Small ribosomal subunit protein uS17, found in Stutzerimonas stutzeri (strain A1501) (Pseudomonas stutzeri).